A 393-amino-acid chain; its full sequence is Homeobox protein knotted-1-like 4 (393 aa).

Over residues 1–13 the composition is skewed to polar residues; that stretch reads MAFHNNHFNHFTD. Disordered regions lie at residues 1–39 and 81–114; these read MAFH…PPNW and QRGN…EKKE. Positions 286–306 constitute an ELK domain; sequence ELKHELKQGYKEKIVDIREEI. The segment at residues 307-370 is a DNA-binding region (homeobox; TALE-type); it reads LRKRRAGKLP…NQRKRNWHSN (64 aa). The segment at 363-393 is disordered; the sequence is RKRNWHSNPSSSTVSKNKRRSNAGENSGRDR. The span at 368 to 377 shows a compositional bias: polar residues; it reads HSNPSSSTVS.

It belongs to the TALE/KNOX homeobox family. May form heterodimeric complex with the TALE/BELL proteins. Interacts with OFP1, OFP2, OFP4 and OFP12. Interacts with KNATM-B.

It localises to the nucleus. This chain is Homeobox protein knotted-1-like 4 (KNAT4), found in Arabidopsis thaliana (Mouse-ear cress).